The following is a 269-amino-acid chain: 5'-nucleotidase SurE (269 aa).

Residues Asp-11, Asp-12, Ser-43, and Asn-101 each contribute to the a divalent metal cation site.

It belongs to the SurE nucleotidase family. A divalent metal cation serves as cofactor.

The protein resides in the cytoplasm. The catalysed reaction is a ribonucleoside 5'-phosphate + H2O = a ribonucleoside + phosphate. Functionally, nucleotidase that shows phosphatase activity on nucleoside 5'-monophosphates. This Prochlorococcus marinus (strain MIT 9515) protein is 5'-nucleotidase SurE.